We begin with the raw amino-acid sequence, 673 residues long: DNA ligase (673 aa).

NAD(+)-binding positions include 35 to 39 (DAEYD), 84 to 85 (SL), and E115. K117 serves as the catalytic N6-AMP-lysine intermediate. Positions 138, 175, 292, and 316 each coordinate NAD(+). Positions 410, 413, 428, and 434 each coordinate Zn(2+). Residues 592 to 673 (PRKLPLQGLV…FLDLLERGRP (82 aa)) form the BRCT domain.

This sequence belongs to the NAD-dependent DNA ligase family. LigA subfamily. The cofactor is Mg(2+). It depends on Mn(2+) as a cofactor.

The catalysed reaction is NAD(+) + (deoxyribonucleotide)n-3'-hydroxyl + 5'-phospho-(deoxyribonucleotide)m = (deoxyribonucleotide)n+m + AMP + beta-nicotinamide D-nucleotide.. Functionally, DNA ligase that catalyzes the formation of phosphodiester linkages between 5'-phosphoryl and 3'-hydroxyl groups in double-stranded DNA using NAD as a coenzyme and as the energy source for the reaction. It is essential for DNA replication and repair of damaged DNA. The sequence is that of DNA ligase from Methylococcus capsulatus (strain ATCC 33009 / NCIMB 11132 / Bath).